A 258-amino-acid polypeptide reads, in one-letter code: Trans-aconitate 2-methyltransferase (258 aa).

It belongs to the methyltransferase superfamily. Tam family.

Its subcellular location is the cytoplasm. It catalyses the reaction trans-aconitate + S-adenosyl-L-methionine = (E)-3-(methoxycarbonyl)pent-2-enedioate + S-adenosyl-L-homocysteine. In terms of biological role, catalyzes the S-adenosylmethionine monomethyl esterification of trans-aconitate. In Deinococcus radiodurans (strain ATCC 13939 / DSM 20539 / JCM 16871 / CCUG 27074 / LMG 4051 / NBRC 15346 / NCIMB 9279 / VKM B-1422 / R1), this protein is Trans-aconitate 2-methyltransferase.